Consider the following 204-residue polypeptide: UPF0301 protein Mflv_0850 (204 aa).

This sequence belongs to the UPF0301 (AlgH) family.

The chain is UPF0301 protein Mflv_0850 from Mycolicibacterium gilvum (strain PYR-GCK) (Mycobacterium gilvum (strain PYR-GCK)).